We begin with the raw amino-acid sequence, 109 residues long: Ribonuclease P protein component (109 aa).

It belongs to the RnpA family. Consists of a catalytic RNA component (M1 or rnpB) and a protein subunit.

It carries out the reaction Endonucleolytic cleavage of RNA, removing 5'-extranucleotides from tRNA precursor.. Its function is as follows. RNaseP catalyzes the removal of the 5'-leader sequence from pre-tRNA to produce the mature 5'-terminus. It can also cleave other RNA substrates such as 4.5S RNA. The protein component plays an auxiliary but essential role in vivo by binding to the 5'-leader sequence and broadening the substrate specificity of the ribozyme. This Mycoplasma mycoides subsp. mycoides SC (strain CCUG 32753 / NCTC 10114 / PG1) protein is Ribonuclease P protein component.